Here is a 709-residue protein sequence, read N- to C-terminus: Potassium-transporting ATPase ATP-binding subunit (709 aa).

A run of 4 helical transmembrane segments spans residues 55-75 (VMLVVLVGAVITTLAFLRDLA), 86-106 (GLVAAFLWFTVLFANFAEAMA), 236-256 (IALNILLAGLTIIFLLAVVTL), and 269-289 (VVVLVALLVCLIPTTIGALLS). The 4-aspartylphosphate intermediate role is filled by D324. ATP contacts are provided by residues D361, E365, 395–402 (FTAETRMS), and K417. The Mg(2+) site is built by D545 and D549. Transmembrane regions (helical) follow at residues 615–635 (FAIIPAMFVGLYPVLDKLNVM), 643–663 (AILSAVIFNALVIVALIPLAL), and 688–708 (GLVVPFIGIKLVDLVIVALGV).

The protein belongs to the cation transport ATPase (P-type) (TC 3.A.3) family. Type IA subfamily. As to quaternary structure, the system is composed of three essential subunits: KdpA, KdpB and KdpC.

It is found in the cell membrane. The catalysed reaction is K(+)(out) + ATP + H2O = K(+)(in) + ADP + phosphate + H(+). Functionally, part of the high-affinity ATP-driven potassium transport (or Kdp) system, which catalyzes the hydrolysis of ATP coupled with the electrogenic transport of potassium into the cytoplasm. This subunit is responsible for energy coupling to the transport system and for the release of the potassium ions to the cytoplasm. The sequence is that of Potassium-transporting ATPase ATP-binding subunit from Mycobacterium tuberculosis (strain ATCC 25618 / H37Rv).